The following is a 239-amino-acid chain: Nicotinamide riboside transporter PnuC (239 aa).

At 1–21 the chain is on the cytoplasmic side; that stretch reads MDFFSVQNILVHIPIGAGGYD. A helical membrane pass occupies residues 22–42; the sequence is LSWIEAVGTIAGLLCIGLASL. At 43–48 the chain is on the periplasmic side; sequence EKISNY. The helical transmembrane segment at 49 to 68 threads the bilayer; the sequence is FFGLINVTLFGIIFFQIQLY. Residues 69-71 lie on the Cytoplasmic side of the membrane; it reads ASL. The helical transmembrane segment at 72 to 89 threads the bilayer; it reads LLQVFFFAANIYGWYAWS. The Periplasmic portion of the chain corresponds to 90 to 109; sequence RQTSQNEAELKIRWLPLPKA. A helical transmembrane segment spans residues 110 to 127; it reads LSWLAVCVVSIGLMTVFI. The Cytoplasmic segment spans residues 128–157; the sequence is NPVFAFLTRVAVMIMQALGLQVVMPELQPD. A helical membrane pass occupies residues 158–177; the sequence is AFPFWDSCMMVLSIVAMILM. The Periplasmic portion of the chain corresponds to 178 to 183; sequence TRKYVE. Residues 184–206 form a helical membrane-spanning segment; that stretch reads NWLLWVIINVISVVIFALQGVYA. Residues Trp-188 and Asn-192 each contribute to the beta-nicotinamide D-riboside site. Residues 207-239 lie on the Cytoplasmic side of the membrane; the sequence is MSLEYIILTFIALNGSRMWINSARERGSRALSH.

Belongs to the nicotinamide ribonucleoside (NR) uptake permease (TC 4.B.1) family.

The protein resides in the cell inner membrane. Its function is as follows. Required for nicotinamide riboside transport across the inner membrane. This Escherichia coli (strain K12) protein is Nicotinamide riboside transporter PnuC (pnuC).